A 447-amino-acid polypeptide reads, in one-letter code: Tubulin beta-1 chain (447 aa).

Positions 11, 69, 138, 142, 143, 144, 204, and 226 each coordinate GTP. Residue E69 coordinates Mg(2+). Polar residues predominate over residues 411-427 (AESNMNDLVSEYQQYQD). The segment at 411–447 (AESNMNDLVSEYQQYQDATADEEGDYEDEEEQVPEDE) is disordered. A compositionally biased stretch (acidic residues) spans 429-447 (TADEEGDYEDEEEQVPEDE).

It belongs to the tubulin family. Dimer of alpha and beta chains. A typical microtubule is a hollow water-filled tube with an outer diameter of 25 nm and an inner diameter of 15 nM. Alpha-beta heterodimers associate head-to-tail to form protofilaments running lengthwise along the microtubule wall with the beta-tubulin subunit facing the microtubule plus end conferring a structural polarity. Microtubules usually have 13 protofilaments but different protofilament numbers can be found in some organisms and specialized cells. It depends on Mg(2+) as a cofactor. In terms of tissue distribution, expressed in leaf sheaths.

It localises to the cytoplasm. The protein localises to the cytoskeleton. Tubulin is the major constituent of microtubules, a cylinder consisting of laterally associated linear protofilaments composed of alpha- and beta-tubulin heterodimers. Microtubules grow by the addition of GTP-tubulin dimers to the microtubule end, where a stabilizing cap forms. Below the cap, tubulin dimers are in GDP-bound state, owing to GTPase activity of alpha-tubulin. The chain is Tubulin beta-1 chain (TUBB1) from Oryza sativa subsp. japonica (Rice).